The sequence spans 260 residues: Thiamine thiazole synthase (260 aa).

NAD(+) is bound by residues Ala-36, 55 to 56 (EQ), Gly-63, and 154 to 156 (HVD). Positions 156 and 171 each coordinate Fe cation. Residue Met-224 coordinates NAD(+). Arg-234 is a binding site for glycine.

It belongs to the THI4 family. In terms of assembly, homooctamer; tetramer of dimers. It depends on Fe(2+) as a cofactor.

The enzyme catalyses hydrogen sulfide + glycine + NAD(+) = ADP-5-ethyl-4-methylthiazole-2-carboxylate + nicotinamide + 3 H2O + H(+). It functions in the pathway cofactor biosynthesis; thiamine diphosphate biosynthesis. In terms of biological role, involved in the biosynthesis of the thiazole moiety of thiamine. Catalyzes the conversion of NAD and glycine to adenosine diphosphate 5-(2-hydroxyethyl)-4-methylthiazole-2-carboxylate (ADT), an adenylated thiazole intermediate, using free sulfide as a source of sulfur. This chain is Thiamine thiazole synthase, found in Methanosarcina mazei (strain ATCC BAA-159 / DSM 3647 / Goe1 / Go1 / JCM 11833 / OCM 88) (Methanosarcina frisia).